Consider the following 224-residue polypeptide: Uracil-DNA glycosylase (224 aa).

The Proton acceptor role is filled by aspartate 62.

The protein belongs to the uracil-DNA glycosylase (UDG) superfamily. UNG family.

The protein localises to the cytoplasm. The enzyme catalyses Hydrolyzes single-stranded DNA or mismatched double-stranded DNA and polynucleotides, releasing free uracil.. Its function is as follows. Excises uracil residues from the DNA which can arise as a result of misincorporation of dUMP residues by DNA polymerase or due to deamination of cytosine. This Aliivibrio fischeri (strain ATCC 700601 / ES114) (Vibrio fischeri) protein is Uracil-DNA glycosylase.